The primary structure comprises 498 residues: ATP synthase subunit beta, chloroplastic (498 aa).

ATP is bound at residue 172–179; that stretch reads GGAGVGKT.

It belongs to the ATPase alpha/beta chains family. As to quaternary structure, F-type ATPases have 2 components, CF(1) - the catalytic core - and CF(0) - the membrane proton channel. CF(1) has five subunits: alpha(3), beta(3), gamma(1), delta(1), epsilon(1). CF(0) has four main subunits: a(1), b(1), b'(1) and c(9-12).

Its subcellular location is the plastid. The protein resides in the chloroplast thylakoid membrane. It catalyses the reaction ATP + H2O + 4 H(+)(in) = ADP + phosphate + 5 H(+)(out). Functionally, produces ATP from ADP in the presence of a proton gradient across the membrane. The catalytic sites are hosted primarily by the beta subunits. The chain is ATP synthase subunit beta, chloroplastic from Nicotiana sylvestris (Wood tobacco).